The primary structure comprises 118 residues: Fluoride-specific ion channel FluC 1 (118 aa).

4 helical membrane-spanning segments follow: residues 5–25 (FVLV…ISVL), 34–54 (FPFA…FLVS), 56–76 (ALGP…YTTF), and 98–118 (YLGC…MLGV). Glycine 71 and threonine 74 together coordinate Na(+).

It belongs to the fluoride channel Fluc/FEX (TC 1.A.43) family.

The protein resides in the cell membrane. It catalyses the reaction fluoride(in) = fluoride(out). Na(+) is not transported, but it plays an essential structural role and its presence is essential for fluoride channel function. Functionally, fluoride-specific ion channel. Important for reducing fluoride concentration in the cell, thus reducing its toxicity. This chain is Fluoride-specific ion channel FluC 1, found in Listeria monocytogenes serotype 4b (strain F2365).